The primary structure comprises 284 residues: Diaminopimelate epimerase (284 aa).

Residues Asn20, Gln53, and Asn73 each contribute to the substrate site. Cys82 functions as the Proton donor in the catalytic mechanism. Substrate contacts are provided by residues 83–84, Asn167, Asn200, and 218–219; these read GN and ER. Catalysis depends on Cys227, which acts as the Proton acceptor. Position 228-229 (228-229) interacts with substrate; sequence GS.

This sequence belongs to the diaminopimelate epimerase family. As to quaternary structure, homodimer.

The protein resides in the cytoplasm. It catalyses the reaction (2S,6S)-2,6-diaminopimelate = meso-2,6-diaminopimelate. It participates in amino-acid biosynthesis; L-lysine biosynthesis via DAP pathway; DL-2,6-diaminopimelate from LL-2,6-diaminopimelate: step 1/1. In terms of biological role, catalyzes the stereoinversion of LL-2,6-diaminopimelate (L,L-DAP) to meso-diaminopimelate (meso-DAP), a precursor of L-lysine and an essential component of the bacterial peptidoglycan. The chain is Diaminopimelate epimerase from Xylella fastidiosa (strain 9a5c).